The chain runs to 130 residues: Small ribosomal subunit protein uS9 (130 aa).

Belongs to the universal ribosomal protein uS9 family.

In Pseudomonas aeruginosa (strain LESB58), this protein is Small ribosomal subunit protein uS9.